The following is a 526-amino-acid chain: Exodeoxyribonuclease 7 large subunit (526 aa).

The tract at residues 497–526 is disordered; that stretch reads AMTTEGGTPPGGAKKRSTKPAEPTKQGSLF.

The protein belongs to the XseA family. In terms of assembly, heterooligomer composed of large and small subunits.

It localises to the cytoplasm. The enzyme catalyses Exonucleolytic cleavage in either 5'- to 3'- or 3'- to 5'-direction to yield nucleoside 5'-phosphates.. Functionally, bidirectionally degrades single-stranded DNA into large acid-insoluble oligonucleotides, which are then degraded further into small acid-soluble oligonucleotides. The polypeptide is Exodeoxyribonuclease 7 large subunit (Rhizobium etli (strain ATCC 51251 / DSM 11541 / JCM 21823 / NBRC 15573 / CFN 42)).